A 242-amino-acid polypeptide reads, in one-letter code: MEKMENIKNNKINEIKDIENLRLTSGKIINKNVHQIGIIALGSYLENHGTVLPIDTDIKIASYIALNVAIQTGAKFLGCVLPSTEYEYVKHGIHNTPNEVVEYIDFLVEQGKKIGINKFLIINCHGGNTLINELIEELPYKSDIKLKIKNITSTHASTEELSVGYVIGIADKSKLKEHNPKDYPEIAMIGLTEARKNNKYIDNEAKIAEKKGITINEDLGNKILKNAINECILEVELLLNNK.

The Fe cation site is built by E46, H48, D57, and H125.

Belongs to the creatininase superfamily. FAPy deformylase family. As to quaternary structure, homodimer. The cofactor is Fe(2+). It depends on Zn(2+) as a cofactor.

The catalysed reaction is 2-amino-5-formylamino-6-(5-phospho-D-ribosylamino)pyrimidin-4(3H)-one + H2O = 2,5-diamino-6-(1-D-ribosylamino)pyrimidin-4(3H)-one 5'-phosphate + formate + H(+). It functions in the pathway cofactor biosynthesis; coenzyme F420 biosynthesis. The protein operates within cofactor biosynthesis; riboflavin biosynthesis. Its function is as follows. Catalyzes the hydrolysis of the formamide of 2-amino-5-formylamino-6-ribosylamino-4(3H)-pyrimidinone 5'-monophosphate (FAPy) to form 2,5-diamino-6-ribosylamino-4(3H)-pyrimidinone 5'-phosphate (APy). The protein is 2-amino-5-formylamino-6-ribosylaminopyrimidin-4(3H)-one 5'-monophosphate deformylase of Methanococcus aeolicus (strain ATCC BAA-1280 / DSM 17508 / OCM 812 / Nankai-3).